The following is a 219-amino-acid chain: Protein VERNALIZATION 2 (219 aa).

Residues 138 to 180 (REAKVMRYREKKKRRRYEKQIRYESRKAYAEMRPRVKGRFAKV) enclose the CCT domain.

Mainly expressed in leaves, and at low levels in the shoot apical meristem (SAM).

Its subcellular location is the nucleus. Involved in the regulation of vernalization; this process in essential for flowering in cv. Bd29-1 but seems do not occur in cv. Bd21. This Brachypodium distachyon (Purple false brome) protein is Protein VERNALIZATION 2.